A 113-amino-acid polypeptide reads, in one-letter code: Hydrogenase maturation factor HypA (113 aa).

His-2 is a binding site for Ni(2+). Positions 73, 76, 89, and 92 each coordinate Zn(2+).

It belongs to the HypA/HybF family.

Involved in the maturation of [NiFe] hydrogenases. Required for nickel insertion into the metal center of the hydrogenase. This chain is Hydrogenase maturation factor HypA, found in Aeromonas hydrophila subsp. hydrophila (strain ATCC 7966 / DSM 30187 / BCRC 13018 / CCUG 14551 / JCM 1027 / KCTC 2358 / NCIMB 9240 / NCTC 8049).